Reading from the N-terminus, the 66-residue chain is Cocaine- and amphetamine-regulated transcript protein (66 aa).

Intrachain disulfides connect Cys34–Cys52 and Cys40–Cys60.

It belongs to the CART family.

The protein localises to the secreted. Its function is as follows. Satiety factor closely associated with the actions of leptin and neuropeptide y; this anorectic peptide inhibits both normal and starvation-induced feeding and completely blocks the feeding response induced by neuropeptide Y and regulated by leptin in the hypothalamus. The protein is Cocaine- and amphetamine-regulated transcript protein (CARTPT) of Sus scrofa (Pig).